We begin with the raw amino-acid sequence, 494 residues long: Transcriptional regulator calD (494 aa).

It is found in the nucleus. Functionally, transcription co-regulator that might be involved in the regulation of the expression of the gene cluster that mediates the biosynthesis of calbistrins and related compounds such as decumbenones. Calbistrin A is a secondary metabolite with an interesting structure that was recently found to have bioactivity against leukemia cells. It consists of two polyketides linked by an ester bond: a bicyclic decalin containing polyketide and a linear 12 carbon dioic acid structure. The chain is Transcriptional regulator calD from Penicillium decumbens.